The chain runs to 468 residues: Kynureninase 2 (468 aa).

Residues leucine 134, threonine 135, phenylalanine 162–aspartate 165, aspartate 247, histidine 250, and tyrosine 272 contribute to the pyridoxal 5'-phosphate site. Lysine 273 bears the N6-(pyridoxal phosphate)lysine mark. Positions 312 and 340 each coordinate pyridoxal 5'-phosphate.

It belongs to the kynureninase family. As to quaternary structure, homodimer. It depends on pyridoxal 5'-phosphate as a cofactor.

The protein resides in the cytoplasm. It catalyses the reaction L-kynurenine + H2O = anthranilate + L-alanine + H(+). It carries out the reaction 3-hydroxy-L-kynurenine + H2O = 3-hydroxyanthranilate + L-alanine + H(+). It participates in amino-acid degradation; L-kynurenine degradation; L-alanine and anthranilate from L-kynurenine: step 1/1. The protein operates within cofactor biosynthesis; NAD(+) biosynthesis; quinolinate from L-kynurenine: step 2/3. In terms of biological role, catalyzes the cleavage of L-kynurenine (L-Kyn) and L-3-hydroxykynurenine (L-3OHKyn) into anthranilic acid (AA) and 3-hydroxyanthranilic acid (3-OHAA), respectively. This is Kynureninase 2 (bna5-2) from Aspergillus oryzae (strain ATCC 42149 / RIB 40) (Yellow koji mold).